We begin with the raw amino-acid sequence, 209 residues long: Ribosomal RNA large subunit methyltransferase E (209 aa).

5 residues coordinate S-adenosyl-L-methionine: Gly63, Trp65, Asp83, Asp99, and Asp124. Lys164 acts as the Proton acceptor in catalysis.

Belongs to the class I-like SAM-binding methyltransferase superfamily. RNA methyltransferase RlmE family.

The protein resides in the cytoplasm. The enzyme catalyses uridine(2552) in 23S rRNA + S-adenosyl-L-methionine = 2'-O-methyluridine(2552) in 23S rRNA + S-adenosyl-L-homocysteine + H(+). Functionally, specifically methylates the uridine in position 2552 of 23S rRNA at the 2'-O position of the ribose in the fully assembled 50S ribosomal subunit. The polypeptide is Ribosomal RNA large subunit methyltransferase E (Shewanella piezotolerans (strain WP3 / JCM 13877)).